The chain runs to 142 residues: ATP synthase epsilon chain, chloroplastic (142 aa).

Belongs to the ATPase epsilon chain family. F-type ATPases have 2 components, CF(1) - the catalytic core - and CF(0) - the membrane proton channel. CF(1) has five subunits: alpha(3), beta(3), gamma(1), delta(1), epsilon(1). CF(0) has three main subunits: a, b and c.

The protein resides in the plastid. It localises to the chloroplast thylakoid membrane. Produces ATP from ADP in the presence of a proton gradient across the membrane. This Ostreococcus tauri protein is ATP synthase epsilon chain, chloroplastic.